The chain runs to 94 residues: Putative regulatory protein Tmel_0100 (94 aa).

Belongs to the RemA family.

This is Putative regulatory protein Tmel_0100 from Thermosipho melanesiensis (strain DSM 12029 / CIP 104789 / BI429).